The sequence spans 471 residues: Trigger factor (471 aa).

Residues 169–254 (EDRVTIDYLG…VKEVAKPNEL (86 aa)) form the PPIase FKBP-type domain. Positions 435–471 (VSKEELTAEDEDAASEAKPAKKAAAKKKAEEGKSEEA) are disordered. A compositionally biased stretch (basic and acidic residues) spans 461 to 471 (KKAEEGKSEEA).

It belongs to the FKBP-type PPIase family. Tig subfamily.

The protein localises to the cytoplasm. It carries out the reaction [protein]-peptidylproline (omega=180) = [protein]-peptidylproline (omega=0). Its function is as follows. Involved in protein export. Acts as a chaperone by maintaining the newly synthesized protein in an open conformation. Functions as a peptidyl-prolyl cis-trans isomerase. The chain is Trigger factor from Brucella abortus (strain S19).